Here is a 521-residue protein sequence, read N- to C-terminus: Phosphoethanolamine transferase EptA (521 aa).

The next 6 helical transmembrane spans lie at 18–38, 47–67, 79–99, 118–138, 150–170, and 182–202; these read AGLL…FVYV, FIAM…LALG, IVFS…KVFL, FLSV…GYVI, APFL…LANT, and FIGG…VSAL.

The protein belongs to the phosphoethanolamine transferase family. EptA subfamily.

Its subcellular location is the cell inner membrane. Its pathway is bacterial outer membrane biogenesis; LPS lipid A biosynthesis. Probably catalyzes the addition of a phosphoethanolamine moiety to the dephosphorylated 1-position of the disaccharide backbone of lipid A. Lipid A that is 1-phosphorylated is not a substrate for this enzyme. The protein is Phosphoethanolamine transferase EptA of Helicobacter pylori (strain ATCC 700392 / 26695) (Campylobacter pylori).